The primary structure comprises 158 residues: Cyclic pyranopterin monophosphate synthase (158 aa).

Residues 76 to 78 and 114 to 115 each bind substrate; these read LCH and ME. Residue Asp-129 is part of the active site.

This sequence belongs to the MoaC family. In terms of assembly, homohexamer; trimer of dimers.

The catalysed reaction is (8S)-3',8-cyclo-7,8-dihydroguanosine 5'-triphosphate = cyclic pyranopterin phosphate + diphosphate. It participates in cofactor biosynthesis; molybdopterin biosynthesis. Catalyzes the conversion of (8S)-3',8-cyclo-7,8-dihydroguanosine 5'-triphosphate to cyclic pyranopterin monophosphate (cPMP). The chain is Cyclic pyranopterin monophosphate synthase from Shewanella frigidimarina (strain NCIMB 400).